We begin with the raw amino-acid sequence, 364 residues long: Histidinol-phosphate aminotransferase (364 aa).

Lys-222 carries the N6-(pyridoxal phosphate)lysine modification.

Belongs to the class-II pyridoxal-phosphate-dependent aminotransferase family. Histidinol-phosphate aminotransferase subfamily. Homodimer. The cofactor is pyridoxal 5'-phosphate.

The catalysed reaction is L-histidinol phosphate + 2-oxoglutarate = 3-(imidazol-4-yl)-2-oxopropyl phosphate + L-glutamate. Its pathway is amino-acid biosynthesis; L-histidine biosynthesis; L-histidine from 5-phospho-alpha-D-ribose 1-diphosphate: step 7/9. In Brevibacillus brevis (strain 47 / JCM 6285 / NBRC 100599), this protein is Histidinol-phosphate aminotransferase.